The chain runs to 352 residues: Matrix protein (352 aa).

A disordered region spans residues 1–22; that stretch reads MEPDIKSISSESMEGVSDFSPS. Residues 106–115 carry the Nuclear export signal 1 motif; the sequence is LLEELCSLKV. The short motif at 244–258 is the Nuclear localization signal element; the sequence is RRAGKYYSVDYCRRK. The Nuclear export signal 2 signature appears at 268-276; that stretch reads LGSIGGLSL.

The protein belongs to the morbillivirus/respirovirus/rubulavirus M protein family. Homomultimer. Interacts with host TRIM6; this interaction inhibits the IKBKE-dependent activation of the type I interferon signaling pathway. Interacts with host ANP32B; this interaction promotes M nuclear localization. Post-translationally, ubiquitinated; regulates matrix nuclear export.

It localises to the virion. The protein localises to the host cytoplasm. Its subcellular location is the host cell membrane. The protein resides in the host nucleus. Functionally, plays a crucial role in virion assembly and budding. Forms a shell at the inner face of the plasma membrane. Transits through the host nucleus before gaining the functional ability to localize and bud from the plasma membrane. Mediates together with fusion protein the incorporation of the glycoprotein to the viral particles. Also participates in the inhibition of the host interferon type I antiviral response by interacting with and thereby inhibiting host TRIM6. The sequence is that of Matrix protein (M) from Cynopterus brachyotis (Lesser short-nosed fruit bat).